Reading from the N-terminus, the 156-residue chain is Small ribosomal subunit protein uS7 (156 aa).

This sequence belongs to the universal ribosomal protein uS7 family. As to quaternary structure, part of the 30S ribosomal subunit. Contacts proteins S9 and S11.

Its function is as follows. One of the primary rRNA binding proteins, it binds directly to 16S rRNA where it nucleates assembly of the head domain of the 30S subunit. Is located at the subunit interface close to the decoding center, probably blocks exit of the E-site tRNA. The sequence is that of Small ribosomal subunit protein uS7 from Salinispora arenicola (strain CNS-205).